A 307-amino-acid chain; its full sequence is Mitochondrial brown fat uncoupling protein 1 (307 aa).

At 1 to 10 (MVSQTTSEVQ) the chain is on the mitochondrial intermembrane side. Residues 11–32 (PTMGVKIFSAGVAACLADIITF) traverse the membrane as a helical segment. 3 Solcar repeats span residues 11–102 (PTMG…VQEY), 111–201 (PTLV…MKGA), and 210–295 (DDVP…LKKE). Residues 33-73 (PLDTAKVRLQIQGEGQTSSTIRYKGVLGTITTLAKTEGLPK) are Mitochondrial matrix-facing. Fatty acid 16:0 is bound at residue Lys56. Residues 74–96 (LYSGLPAGIQRQISFASLRIGLY) traverse the membrane as a helical segment. Residues 97-116 (DTVQEYFSSGKETPPTLVNR) lie on the Mitochondrial intermembrane side of the membrane. Residues 117 to 133 (ISAGLMTGGVAVFIGQP) traverse the membrane as a helical segment. Topologically, residues 134 to 178 (TEVVKVRLQAQSHLHGIKPRYTGTYNAYRIIATTESLSTLWKGTT) are mitochondrial matrix. A helical membrane pass occupies residues 179–195 (PNLLRNVIINCTELVTY). Over 196–212 (DLMKGALVNNQILADDV) the chain is Mitochondrial intermembrane. The chain crosses the membrane as a helical span at residues 213 to 232 (PCHLLSALVAGFCTTFLASP). At 233 to 266 (ADVVKTRFINSLPGQYPSVPSCAMTMFTKEGPTA) the chain is on the mitochondrial matrix side. At Cys254 the chain carries Cysteine sulfenic acid (-SOH). Residues 267 to 289 (FFKGFVPSFLRLASWNVIMFVCF) traverse the membrane as a helical segment. Lys269 serves as a coordination point for fatty acid 16:0. Residues 290–307 (EQLKKELMKSRQTVDCTT) lie on the Mitochondrial intermembrane side of the membrane.

Belongs to the mitochondrial carrier (TC 2.A.29) family. As to quaternary structure, most probably functions as a monomer. Binds one purine nucleotide per monomer. However, has also been suggested to function as a homodimer or a homotetramer. Tightly associates with cardiolipin in the mitochondrion inner membrane; may stabilize and regulate its activity. May undergo sulfenylation upon cold exposure. May increase the sensitivity of UCP1 thermogenic function to the activation by noradrenaline probably through structural effects. Post-translationally, may undergo ubiquitin-mediated proteasomal degradation. Brown adipose tissue.

It is found in the mitochondrion inner membrane. The catalysed reaction is H(+)(in) = H(+)(out). With respect to regulation, has no constitutive proton transporter activity and has to be activated by long-chain fatty acids/LCFAs. Inhibited by purine nucleotides. Both purine nucleotides and LCFAs bind the cytosolic side of the transporter and directly compete to activate or inhibit it. Activated by noradrenaline and reactive oxygen species. Despite lacking canonical translational encoding for selenocysteine, a small pool of the protein has been observed to selectively incorporate selenocysteine at 'Cys-254'. Selenocysteine-modified protein is highly sensitive to redox modification and may constitute a pool of protein highly sensitive to activation by elevated levels of reactive oxygen species (ROS). In terms of biological role, mitochondrial protein responsible for thermogenic respiration, a specialized capacity of brown adipose tissue and beige fat that participates in non-shivering adaptive thermogenesis to temperature and diet variations and more generally to the regulation of energy balance. Functions as a long-chain fatty acid/LCFA and proton symporter, simultaneously transporting one LCFA and one proton through the inner mitochondrial membrane. However, LCFAs remaining associated with the transporter via their hydrophobic tails, it results in an apparent transport of protons activated by LCFAs. Thereby, dissipates the mitochondrial proton gradient and converts the energy of substrate oxydation into heat instead of ATP. Regulates the production of reactive oxygen species/ROS by mitochondria. In Phodopus sungorus (Striped hairy-footed hamster), this protein is Mitochondrial brown fat uncoupling protein 1.